The primary structure comprises 54 residues: UPF0391 membrane protein Oant_1245 (54 aa).

A run of 2 helical transmembrane segments spans residues 5 to 25 (ALVFLVVALVAGALGFGGIAG) and 29 to 48 (GIAQILFFVFLALLVISLIA).

The protein belongs to the UPF0391 family.

The protein localises to the cell membrane. The sequence is that of UPF0391 membrane protein Oant_1245 from Brucella anthropi (strain ATCC 49188 / DSM 6882 / CCUG 24695 / JCM 21032 / LMG 3331 / NBRC 15819 / NCTC 12168 / Alc 37) (Ochrobactrum anthropi).